Reading from the N-terminus, the 198-residue chain is MSRYTGSLWKVSRRLNYSVSETGKELRKRAYGPGQHGQKKLKLSDYGLQLQEKQKLRFTYGVSEKQFRKTFDNASKLKGIHGEMFLVLLESRLDNVVYRLGFAKTRAQARQLANHGHILVDGKKVDIASYRLKPGQTVTLREKSKNLNIVQEAVNSKFVRADYVSLDKELVGKYVRYPQRNEFLPDINEQLIVEYYNR.

In terms of domain architecture, S4 RNA-binding spans 91–154 (SRLDNVVYRL…KNLNIVQEAV (64 aa)).

This sequence belongs to the universal ribosomal protein uS4 family. In terms of assembly, part of the 30S ribosomal subunit. Contacts protein S5. The interaction surface between S4 and S5 is involved in control of translational fidelity.

Functionally, one of the primary rRNA binding proteins, it binds directly to 16S rRNA where it nucleates assembly of the body of the 30S subunit. Its function is as follows. With S5 and S12 plays an important role in translational accuracy. The sequence is that of Small ribosomal subunit protein uS4 from Onion yellows phytoplasma (strain OY-M).